The following is a 235-amino-acid chain: Endonuclease V (235 aa).

Residues Asp47 and Asp115 each contribute to the Mg(2+) site.

Belongs to the endonuclease V family. Mg(2+) serves as cofactor.

Its subcellular location is the cytoplasm. It catalyses the reaction Endonucleolytic cleavage at apurinic or apyrimidinic sites to products with a 5'-phosphate.. DNA repair enzyme involved in the repair of deaminated bases. Selectively cleaves double-stranded DNA at the second phosphodiester bond 3' to a deoxyinosine leaving behind the intact lesion on the nicked DNA. This Myxococcus xanthus (strain DK1622) protein is Endonuclease V.